The following is a 154-amino-acid chain: Photosystem II extrinsic protein U, chloroplastic (154 aa).

Residues 1 to 36 (MAFISTPLGKVTVKSATVSANRRGLRMQSDSEPVVS) constitute a chloroplast transit peptide. A thylakoid-targeting transit peptide spans 37–61 (RRALLSGALAAAVAAALARARPAQA).

The protein belongs to the PsbU family. PSII is composed of 1 copy each of membrane proteins PsbA, PsbB, PsbC, PsbD, PsbE, PsbF, PsbH, PsbI, PsbJ, PsbK, PsbL, PsbM, PsbT, PsbY, PsbZ, Psb30/Ycf12, at least 3 peripheral proteins of the oxygen-evolving complex and a large number of cofactors. It forms dimeric complexes. The extrinsic subunits in red algae are PsbO (OEC33), PsbQ', cytochrome c-550 and PsbU. Predicted to be translocated into the thylakoid lumen by the Tat system. The position of the first transit peptide cleavage has not been experimentally proven.

The protein localises to the plastid. Its subcellular location is the chloroplast thylakoid membrane. Functionally, one of the extrinsic, lumenal subunits of photosystem II (PSII). PSII is a light-driven water plastoquinone oxidoreductase, using light energy to abstract electrons from H(2)O, generating a proton gradient subsequently used for ATP formation. The extrinsic proteins stabilize the structure of photosystem II oxygen-evolving complex (OEC), the ion environment of oxygen evolution and protect the OEC against heat-induced inactivation. This Cyanidium caldarium (Red alga) protein is Photosystem II extrinsic protein U, chloroplastic.